Here is a 688-residue protein sequence, read N- to C-terminus: DNA-directed RNA polymerase subunit beta' (688 aa).

Residues Cys69, Cys71, Cys87, and Cys90 each contribute to the Zn(2+) site. Asp489, Asp491, and Asp493 together coordinate Mg(2+).

It belongs to the RNA polymerase beta' chain family. RpoC1 subfamily. In terms of assembly, in plastids the minimal PEP RNA polymerase catalytic core is composed of four subunits: alpha, beta, beta', and beta''. When a (nuclear-encoded) sigma factor is associated with the core the holoenzyme is formed, which can initiate transcription. Mg(2+) is required as a cofactor. The cofactor is Zn(2+).

It localises to the plastid. Its subcellular location is the chloroplast. It catalyses the reaction RNA(n) + a ribonucleoside 5'-triphosphate = RNA(n+1) + diphosphate. DNA-dependent RNA polymerase catalyzes the transcription of DNA into RNA using the four ribonucleoside triphosphates as substrates. In Piper cenocladum (Ant piper), this protein is DNA-directed RNA polymerase subunit beta'.